The primary structure comprises 1052 residues: Multidrug resistance protein MdtB (1052 aa).

The next 11 membrane-spanning stretches (helical) occupy residues 15 to 37, 345 to 362, 367 to 389, 396 to 418, 438 to 460, 472 to 494, 535 to 557, 867 to 889, 909 to 931, 968 to 990, and 1000 to 1022; these read LFIL…GIIG, FELL…YLFL, ATII…MYFL, LTLM…VIEN, GEIG…PLLF, FAVT…TPMM, HPWL…YLLI, LWLI…ESFI, LMLT…IGIV, ILMT…GVGA, and MVGG…YLLF. The segment at 1032-1052 is disordered; sequence KNRHRDEDIDSSELLNGQEPQ.

Belongs to the resistance-nodulation-cell division (RND) (TC 2.A.6) family. MdtB subfamily. In terms of assembly, part of a tripartite efflux system composed of MdtA, MdtB and MdtC. MdtB forms a heteromultimer with MdtC.

It localises to the cell inner membrane. This chain is Multidrug resistance protein MdtB, found in Yersinia pseudotuberculosis serotype I (strain IP32953).